Reading from the N-terminus, the 615-residue chain is Gluconate 2-dehydrogenase flavoprotein (615 aa).

Residues 1-22 form the signal peptide; that stretch reads MERGERVSVPVSGYSRGEGVTV. Residue His-542 is the Proton acceptor of the active site.

This sequence belongs to the GMC oxidoreductase family. In terms of assembly, heterotrimer. It depends on FAD as a cofactor.

The protein resides in the cell membrane. It catalyses the reaction D-gluconate + A = 2-dehydro-D-gluconate + AH2. Part of the heterotrimer that catalyzes the conversion of D-gluconate to 2-dehydro-D-gluconate. This subunit functions as the dehydrogenase. This Pantoea cypripedii (Pectobacterium cypripedii) protein is Gluconate 2-dehydrogenase flavoprotein.